A 610-amino-acid chain; its full sequence is UvrABC system protein C (610 aa).

The GIY-YIG domain maps to 16-94; it reads SQPGVYRMYD…IKLYQPRYNV (79 aa). Positions 204 to 239 constitute a UVR domain; sequence DQVLTQLIARMEKASQDLAFEEAARIRDQIQAVRRV.

It belongs to the UvrC family. As to quaternary structure, interacts with UvrB in an incision complex.

Its subcellular location is the cytoplasm. Its function is as follows. The UvrABC repair system catalyzes the recognition and processing of DNA lesions. UvrC both incises the 5' and 3' sides of the lesion. The N-terminal half is responsible for the 3' incision and the C-terminal half is responsible for the 5' incision. The protein is UvrABC system protein C of Salmonella typhimurium (strain LT2 / SGSC1412 / ATCC 700720).